A 228-amino-acid chain; its full sequence is Aldehyde dehydrogenase 9 (228 aa).

Position 76 to 81 (76 to 81) interacts with NAD(+); sequence GSTETA. Catalysis depends on residues Glu99 and Cys132.

Belongs to the aldehyde dehydrogenase family.

The catalysed reaction is an aldehyde + NAD(+) + H2O = a carboxylate + NADH + 2 H(+). It functions in the pathway alcohol metabolism; ethanol degradation; acetate from ethanol: step 2/2. The polypeptide is Aldehyde dehydrogenase 9 (ALDH9) (Polyandrocarpa misakiensis (Tunicate)).